The chain runs to 49 residues: Large ribosomal subunit protein bL33D (49 aa).

The protein belongs to the bacterial ribosomal protein bL33 family.

This is Large ribosomal subunit protein bL33D (rpmG4) from Enterococcus faecalis (strain ATCC 700802 / V583).